A 196-amino-acid polypeptide reads, in one-letter code: Small heat shock protein C3 (196 aa).

The sHSP domain occupies 88-196 (SAYSSSAIRT…EKDAKEIPIQ (109 aa)).

It belongs to the small heat shock protein (HSP20) family.

The protein is Small heat shock protein C3 (hspc3-1) of Rickettsia felis (strain ATCC VR-1525 / URRWXCal2) (Rickettsia azadi).